The sequence spans 452 residues: Activating transcription factor 7-interacting protein 2 (452 aa).

Serine 184 is modified (phosphoserine). Positions 185–206 (RSKRISSVNHTPLNSSEKAGRK) are disordered. At serine 257 the chain carries Phosphoserine. Residues 346–450 (PPQKPELKVK…IKSIPRFSEN (105 aa)) form the Fibronectin type-III domain.

This sequence belongs to the MCAF family. In terms of assembly, interacts with MBD1, SETDB1 and SP1. Probably forms a complex with SETDB1 and MBD1. As to expression, expressed in testis.

The protein resides in the nucleus. Functionally, recruiter that couples transcriptional factors to general transcription apparatus and thereby modulates transcription regulation and chromatin formation. Can both act as an activator or a repressor depending on the context. Mediates MBD1-dependent transcriptional repression, probably by recruiting complexes containing SETDB1. The complex formed with MBD1 and SETDB1 represses transcription and probably couples DNA methylation and histone H3 'Lys-9' trimethylation (H3K9me3) activity. This is Activating transcription factor 7-interacting protein 2 (Atf7ip2) from Mus musculus (Mouse).